We begin with the raw amino-acid sequence, 198 residues long: 3-isopropylmalate dehydratase small subunit (198 aa).

The protein belongs to the LeuD family. LeuD type 1 subfamily. Heterodimer of LeuC and LeuD.

It carries out the reaction (2R,3S)-3-isopropylmalate = (2S)-2-isopropylmalate. Its pathway is amino-acid biosynthesis; L-leucine biosynthesis; L-leucine from 3-methyl-2-oxobutanoate: step 2/4. Catalyzes the isomerization between 2-isopropylmalate and 3-isopropylmalate, via the formation of 2-isopropylmaleate. The polypeptide is 3-isopropylmalate dehydratase small subunit (Mycolicibacterium paratuberculosis (strain ATCC BAA-968 / K-10) (Mycobacterium paratuberculosis)).